The primary structure comprises 1004 residues: Translation initiation factor IF-2 (1004 aa).

The tract at residues 36 to 393 is disordered; sequence SSTIEPPVVK…RQKRNEYESM (358 aa). Low complexity-rich tracts occupy residues 62–157 and 173–183; these read AAKP…AKPA and AAKPGAEAPRP. Composition is skewed to pro residues over residues 184–196 and 219–236; these read GGMPRPMGKPAPK and PRPGGGPRPGGGPRPGGG. Composition is skewed to gly residues over residues 237–249 and 261–277; these read PRPQGQGRPGGQR and GNRGGQRQGAGAGGPRP. Residues 279–303 are compositionally biased toward low complexity; the sequence is GGPRPQGGSRPQGGSAQGAQGAPSQ. Gly residues predominate over residues 330–373; sequence GKGGRGGQAGGGAGGGFNRGGGTGGGAGRGGRRGGTAGAFGRPG. Positions 377-386 are enriched in basic residues; that stretch reads RRGRKSKRQK. The 173-residue stretch at 499-671 folds into the tr-type G domain; sequence KRPPVVTVMG…VCLTADAELD (173 aa). The interval 508 to 515 is G1; the sequence is GHVDHGKT. 508–515 provides a ligand contact to GTP; it reads GHVDHGKT. Residues 533–537 form a G2 region; sequence GITQG. The segment at 558-561 is G3; that stretch reads DTPG. GTP contacts are provided by residues 558-562 and 612-615; these read DTPGH and NKID. A G4 region spans residues 612 to 615; the sequence is NKID. The segment at 648–650 is G5; the sequence is SAK.

It belongs to the TRAFAC class translation factor GTPase superfamily. Classic translation factor GTPase family. IF-2 subfamily.

The protein resides in the cytoplasm. In terms of biological role, one of the essential components for the initiation of protein synthesis. Protects formylmethionyl-tRNA from spontaneous hydrolysis and promotes its binding to the 30S ribosomal subunits. Also involved in the hydrolysis of GTP during the formation of the 70S ribosomal complex. The protein is Translation initiation factor IF-2 of Corynebacterium glutamicum (strain ATCC 13032 / DSM 20300 / JCM 1318 / BCRC 11384 / CCUG 27702 / LMG 3730 / NBRC 12168 / NCIMB 10025 / NRRL B-2784 / 534).